A 74-amino-acid chain; its full sequence is Arabinogalactan protein 20 (74 aa).

A signal peptide spans 1-26; sequence MASRNSVAVIALFAFVFAVISPFAGA. At Gln-27 the chain carries Pyrrolidone carboxylic acid. Residues Pro-31, Pro-33, and Pro-35 each carry the 4-hydroxyproline modification. O-linked (Ara...) hydroxyproline glycans are attached at residues Pro-31, Pro-33, and Pro-35. A lipid anchor (GPI-anchor amidated serine) is attached at Ser-37. A propeptide spans 38–74 (removed in mature form); it reads DGTSIDQGIAYLLMVVALVLTYLIHPLDASSSSYTFF.

This sequence belongs to the AG-peptide AGP family. Contains 4-hydroxyproline; hydroxylated on Pro-31, Pro-33 and Pro-35. In terms of processing, O-glycosylated on hydroxyprolines; noncontiguous hydroxylproline residues are glycosylated with arabinogalactan.

It is found in the cell membrane. Functionally, proteoglycan that seems to be implicated in diverse developmental roles such as differentiation, cell-cell recognition, embryogenesis and programmed cell death. This is Arabinogalactan protein 20 from Arabidopsis thaliana (Mouse-ear cress).